A 501-amino-acid chain; its full sequence is Circadian clock oscillator protein KaiC (501 aa).

2 consecutive KaiC domains span residues 1-232 (MQVQ…ITVF) and 246-501 (IRIS…REKK). Residues glycine 34, threonine 35, glycine 36, lysine 37, threonine 38, serine 74, lysine 209, leucine 210, arginine 211, threonine 213, histidine 215, threonine 275, glycine 276, threonine 277, glycine 278, lysine 279, and threonine 280 each contribute to the ATP site. A Mg(2+)-binding site is contributed by threonine 38. Mg(2+) is bound by residues threonine 280 and glutamate 303. Tryptophan 316 contributes to the ATP binding site. A Phosphoserine; by autocatalysis modification is found at serine 416. Phosphothreonine; by autocatalysis is present on threonine 417. Arginine 436, lysine 442, methionine 443, arginine 444, serine 446, histidine 448, and lysine 450 together coordinate ATP.

This sequence belongs to the KaiC family. As to quaternary structure, homohexamer; hexamerization is dependent on ATP-binding. Component of the KaiBC complex. KaiC interacts with SasA, activating its autokinase function and leading to RpaA activation. Mg(2+) serves as cofactor. Phosphorylated on serine and threonine residues by autocatalysis. Has a 4 step phosphorylation cycle; the autokinase acts first on Thr-417, then Ser-416. When Ser-416 is modified KaiC switches to an autophosphatase mode, acting first on phospho-Thr-417 then phospho-Ser-416.

It catalyses the reaction L-seryl-[protein] + ATP = O-phospho-L-seryl-[protein] + ADP + H(+). The catalysed reaction is L-threonyl-[protein] + ATP = O-phospho-L-threonyl-[protein] + ADP + H(+). The enzyme catalyses ATP + H2O = ADP + phosphate + H(+). Central component of the KaiBC oscillator complex, which constitutes the main circadian regulator in cyanobacteria. Its composition changes during the circadian cycle to control KaiC phosphorylation. Autophosphorylates and has a weak ATPase activity; ATPase activity defines the circadian period. This chain is Circadian clock oscillator protein KaiC, found in Prochlorococcus marinus (strain SARG / CCMP1375 / SS120).